A 359-amino-acid chain; its full sequence is Probable dual-specificity RNA methyltransferase RlmN (359 aa).

Residue glutamate 100 is the Proton acceptor of the active site. The Radical SAM core domain maps to 106–340; it reads TDKRLTVCVS…VSVRASRGRD (235 aa). A disulfide bridge links cysteine 113 with cysteine 345. [4Fe-4S] cluster-binding residues include cysteine 120, cysteine 124, and cysteine 127. S-adenosyl-L-methionine-binding positions include 167-168, serine 197, 226-228, and asparagine 302; these read GE and SLH. The active-site S-methylcysteine intermediate is cysteine 345.

The protein belongs to the radical SAM superfamily. RlmN family. It depends on [4Fe-4S] cluster as a cofactor.

The protein localises to the cytoplasm. It carries out the reaction adenosine(2503) in 23S rRNA + 2 reduced [2Fe-2S]-[ferredoxin] + 2 S-adenosyl-L-methionine = 2-methyladenosine(2503) in 23S rRNA + 5'-deoxyadenosine + L-methionine + 2 oxidized [2Fe-2S]-[ferredoxin] + S-adenosyl-L-homocysteine. It catalyses the reaction adenosine(37) in tRNA + 2 reduced [2Fe-2S]-[ferredoxin] + 2 S-adenosyl-L-methionine = 2-methyladenosine(37) in tRNA + 5'-deoxyadenosine + L-methionine + 2 oxidized [2Fe-2S]-[ferredoxin] + S-adenosyl-L-homocysteine. In terms of biological role, specifically methylates position 2 of adenine 2503 in 23S rRNA and position 2 of adenine 37 in tRNAs. The chain is Probable dual-specificity RNA methyltransferase RlmN from Prochlorococcus marinus (strain NATL2A).